Reading from the N-terminus, the 177-residue chain is Secretion monitor (177 aa).

Residues 1-37 form the signal peptide; it reads MIGILNRWRQFGRRYFWPHLLLGMVAASLGVPLNLSG.

The protein belongs to the SecM family.

It localises to the cytoplasm. The protein resides in the cytosol. The protein localises to the periplasm. Regulates secA expression by translational coupling of the secM secA operon. Translational pausing at a specific Pro residue 5 residues before the end of the protein may allow disruption of a mRNA repressor helix that normally suppresses secA translation initiation. The chain is Secretion monitor from Yersinia pestis bv. Antiqua (strain Antiqua).